Reading from the N-terminus, the 1475-residue chain is Protein STU1 (1475 aa).

Disordered stretches follow at residues 870–913 (REST…EPDL) and 1113–1134 (DGES…NRPA). Basic and acidic residues predominate over residues 887 to 896 (DGAHGGDARD).

Belongs to the CLASP family. In terms of assembly, interacts with microtubules.

The protein localises to the cytoplasm. It is found in the cytoskeleton. It localises to the nucleus. The protein resides in the spindle. Its function is as follows. Microtubule binding protein that promotes the stabilization of dynamic microtubules. Required for mitotic spindle formation. This is Protein STU1 (STU1) from Eremothecium gossypii (strain ATCC 10895 / CBS 109.51 / FGSC 9923 / NRRL Y-1056) (Yeast).